We begin with the raw amino-acid sequence, 176 residues long: NAD(P)H-quinone oxidoreductase subunit 6, chloroplastic (176 aa).

The next 5 helical transmembrane spans lie at F10–T30, T32–L52, L63–G83, V92–I112, and F152–F172.

Belongs to the complex I subunit 6 family. In terms of assembly, NDH is composed of at least 16 different subunits, 5 of which are encoded in the nucleus.

Its subcellular location is the plastid. The protein resides in the chloroplast thylakoid membrane. It carries out the reaction a plastoquinone + NADH + (n+1) H(+)(in) = a plastoquinol + NAD(+) + n H(+)(out). The enzyme catalyses a plastoquinone + NADPH + (n+1) H(+)(in) = a plastoquinol + NADP(+) + n H(+)(out). Its function is as follows. NDH shuttles electrons from NAD(P)H:plastoquinone, via FMN and iron-sulfur (Fe-S) centers, to quinones in the photosynthetic chain and possibly in a chloroplast respiratory chain. The immediate electron acceptor for the enzyme in this species is believed to be plastoquinone. Couples the redox reaction to proton translocation, and thus conserves the redox energy in a proton gradient. In Phaseolus vulgaris (Kidney bean), this protein is NAD(P)H-quinone oxidoreductase subunit 6, chloroplastic (ndhG).